A 238-amino-acid polypeptide reads, in one-letter code: 2,3,4,5-tetrahydropyridine-2,6-dicarboxylate N-acetyltransferase (238 aa).

It belongs to the transferase hexapeptide repeat family. DapH subfamily.

The enzyme catalyses (S)-2,3,4,5-tetrahydrodipicolinate + acetyl-CoA + H2O = L-2-acetamido-6-oxoheptanedioate + CoA. It functions in the pathway amino-acid biosynthesis; L-lysine biosynthesis via DAP pathway; LL-2,6-diaminopimelate from (S)-tetrahydrodipicolinate (acetylase route): step 1/3. Its function is as follows. Catalyzes the transfer of an acetyl group from acetyl-CoA to tetrahydrodipicolinate. This is 2,3,4,5-tetrahydropyridine-2,6-dicarboxylate N-acetyltransferase from Thermotoga neapolitana (strain ATCC 49049 / DSM 4359 / NBRC 107923 / NS-E).